The following is a 128-amino-acid chain: Small ribosomal subunit protein uS12 (128 aa).

Residue D89 is modified to 3-methylthioaspartic acid.

Belongs to the universal ribosomal protein uS12 family. In terms of assembly, part of the 30S ribosomal subunit. Contacts proteins S8 and S17. May interact with IF1 in the 30S initiation complex.

Its function is as follows. With S4 and S5 plays an important role in translational accuracy. In terms of biological role, interacts with and stabilizes bases of the 16S rRNA that are involved in tRNA selection in the A site and with the mRNA backbone. Located at the interface of the 30S and 50S subunits, it traverses the body of the 30S subunit contacting proteins on the other side and probably holding the rRNA structure together. The combined cluster of proteins S8, S12 and S17 appears to hold together the shoulder and platform of the 30S subunit. This Campylobacter jejuni subsp. doylei (strain ATCC BAA-1458 / RM4099 / 269.97) protein is Small ribosomal subunit protein uS12.